Consider the following 703-residue polypeptide: Heat shock protein 75 kDa, mitochondrial (703 aa).

Residues 1–56 constitute a mitochondrion transit peptide; the sequence is MARELRMLLLWGRRLRAPALAAACGGKPVLCPWRPPAQSWGPPRSLASSFHVGRPF. Positions 118 and 157 each coordinate ATP. At Ser169 the chain carries Phosphoserine. Asn170 serves as a coordination point for ATP. Residue Thr173 is modified to Phosphothreonine. Residues Phe204 and Arg401 each contribute to the ATP site. 3 positions are modified to N6-acetyllysine: Lys423, Lys430, and Lys465. Residue Thr493 is modified to Phosphothreonine.

The protein belongs to the heat shock protein 90 family. Binds to the intracellular domain of tumor necrosis factor type 1 receptor. Binds to RB1. Interacts with SRC. Interacts with SDHA.

The protein resides in the mitochondrion. Its subcellular location is the mitochondrion inner membrane. The protein localises to the mitochondrion matrix. Chaperone that expresses an ATPase activity. Involved in maintaining mitochondrial function and polarization, downstream of PINK1 and mitochondrial complex I. Is a negative regulator of mitochondrial respiration able to modulate the balance between oxidative phosphorylation and aerobic glycolysis. The impact of TRAP1 on mitochondrial respiration is probably mediated by modulation of mitochondrial SRC and inhibition of SDHA. This is Heat shock protein 75 kDa, mitochondrial (TRAP1) from Bos taurus (Bovine).